A 593-amino-acid polypeptide reads, in one-letter code: Corrinoid activation enzyme RamQ (593 aa).

Residues 1-76 form the 2Fe-2S ferredoxin-type domain; the sequence is MRVLFPLLEE…GMEIYASREQ (76 aa). [2Fe-2S] cluster contacts are provided by Cys-35, Cys-41, Cys-44, and Cys-60.

[2Fe-2S] cluster is required as a cofactor.

In terms of biological role, involved in the degradation of the quaternary amines L-proline betaine and L-carnitine. Component of a corrinoid-dependent methyltransferase system that transfers a methyl group from L-proline betaine or L-carnitine to tetrahydrofolate (THF), forming methyl-THF, a key intermediate in the Wood-Ljungdahl acetogenesis pathway. RamQ is not required for the methyl transfer, but it stimulates reduction of reconstituted MtqC from the Co(II) state to the Co(I) state in vitro. It also stimulates the rate of THF methylation. In Eubacterium limosum, this protein is Corrinoid activation enzyme RamQ.